Consider the following 320-residue polypeptide: L-lactate dehydrogenase (320 aa).

NAD(+) contacts are provided by residues Val18, Asp39, Arg44, Tyr69, and 83–84; that span reads GA. Substrate is bound by residues Gln86 and Arg92. NAD(+)-binding positions include Thr105, 122-124, and Ser147; that span reads AAN. Position 124–127 (124–127) interacts with substrate; it reads NPVD. 152 to 155 is a binding site for substrate; the sequence is DSAR. Residue His179 is the Proton acceptor of the active site. Tyr223 bears the Phosphotyrosine mark. Residue Thr232 participates in substrate binding.

It belongs to the LDH/MDH superfamily. LDH family. Homotetramer.

It is found in the cytoplasm. The enzyme catalyses (S)-lactate + NAD(+) = pyruvate + NADH + H(+). It functions in the pathway fermentation; pyruvate fermentation to lactate; (S)-lactate from pyruvate: step 1/1. Functionally, catalyzes the conversion of lactate to pyruvate. The sequence is that of L-lactate dehydrogenase from Pediococcus pentosaceus (strain ATCC 25745 / CCUG 21536 / LMG 10740 / 183-1w).